Consider the following 221-residue polypeptide: Putative adhesin P1-like protein MPN_131 (221 aa).

Over residues 13 to 36 (RYGNNHRGSNSSTSGVTTQGQSQN) the composition is skewed to low complexity. Disordered regions lie at residues 13–51 (RYGNNHRGSNSSTSGVTTQGQSQNASSNEPAPTFSNVGV) and 90–183 (GWRN…TPSG). Over residues 37-48 (ASSNEPAPTFSN) the composition is skewed to polar residues. A compositionally biased stretch (basic and acidic residues) spans 130–139 (LKQDKADKSG). Polar residues-rich tracts occupy residues 149–160 (SGDNLTNYTNLP) and 174–183 (HSPTRTTPSG).

This sequence belongs to the adhesin P1 family.

The sequence is that of Putative adhesin P1-like protein MPN_131 from Mycoplasma pneumoniae (strain ATCC 29342 / M129 / Subtype 1) (Mycoplasmoides pneumoniae).